Consider the following 151-residue polypeptide: Cytochrome c oxidase-assembly factor COX23, mitochondrial (151 aa).

A mitochondrion-targeting transit peptide spans 1–10; sequence MEKPSPTRRQ. The interval 1–86 is disordered; the sequence is MEKPSPTRRQ…QYYPDDPENP (86 aa). Residues 7–18 show a composition bias toward polar residues; it reads TRRQTSSLSTIS. The span at 19 to 51 shows a compositional bias: low complexity; that stretch reads NGMTMTNDNRDTTNTNSGSTSSNNSQPSSSSTP. Residues 101 to 143 enclose the CHCH domain; it reads YDPCEESSKLSFQCLERNDYDRSKCQEYFDAYRECKKQWLTAR. Short sequence motifs (cx9C motif) lie at residues 104 to 114 and 125 to 135; these read CEESSKLSFQC and CQEYFDAYREC. 2 cysteine pairs are disulfide-bonded: cysteine 104/cysteine 135 and cysteine 114/cysteine 125.

It belongs to the COX23 family.

The protein localises to the cytoplasm. It localises to the mitochondrion intermembrane space. Functionally, required for the assembly of cytochrome c oxidase. This is Cytochrome c oxidase-assembly factor COX23, mitochondrial (COX23) from Saccharomyces cerevisiae (strain ATCC 204508 / S288c) (Baker's yeast).